The chain runs to 403 residues: Coiled-coil domain-containing glutamate-rich protein 1 (403 aa).

Positions 1-11 (MTQTVNEREDP) are enriched in basic and acidic residues. Disordered regions lie at residues 1-23 (MTQTVNEREDPLNLGGGGWASSI), 51-70 (IEYEASRKQPKQQRSPGSWF), 134-164 (RPPGRKKRWGRRGRGLRRHPRRSFPRNPPID), 202-241 (QQEKLERQQAALRAQQAQEGGISPGDSTTNDAPHSGVEED), and 261-350 (PALM…GEQR). Residues 137–157 (GRKKRWGRRGRGLRRHPRRSF) show a composition bias toward basic residues. Low complexity predominate over residues 209–220 (QQAALRAQQAQE). Over residues 261 to 271 (PALMQHNQSPT) the composition is skewed to polar residues. The span at 275–346 (VEEEEKNVDD…YMLEETGLEE (72 aa)) shows a compositional bias: acidic residues. The stretch at 292–353 (CDEKEESEEE…LEEGEQRAEE (62 aa)) forms a coiled coil.

Expressed in testis.

It localises to the nucleus. In terms of biological role, regulator of histone epigenetic modifications and chromatin compaction into the sperm head, required for histone-to-protamine (HTP) transition. HTP is a key event in which somatic histones are first replaced by testis-specific histone variants, then transition proteins (TNPs) are incorporated into the spermatid nucleus, and finally protamines (PRMs) replace the TNPs to promote chromatin condensation. In Mus musculus (Mouse), this protein is Coiled-coil domain-containing glutamate-rich protein 1 (Ccer1).